The chain runs to 333 residues: BRISC and BRCA1-A complex member 1 (333 aa).

Position 1 is an N-acetylmethionine (Met-1). The interval 1–85 is disordered; it reads MEVAEANSPT…PWQVPASASE (85 aa). Ser-8 is subject to Phosphoserine. A compositionally biased stretch (acidic residues) spans 10 to 24; the sequence is TEEEEEEEEEGEETI. Phosphoserine occurs at positions 33 and 53. The span at 58–67 shows a compositional bias: low complexity; the sequence is EAATADGGAA. The interval 99 to 302 is VWFA-like; that stretch reads VIICLDLSEE…LELHNCMAKL (204 aa).

Belongs to the BABAM1 family. As to quaternary structure, component of the ARISC complex, at least composed of UIMC1/RAP80, ABRAXAS1, BRCC3/BRCC36, BABAM2 and BABAM1/NBA1. Component of the BRCA1-A complex, at least composed of BRCA1, BARD1, UIMC1/RAP80, ABRAXAS1, BRCC3/BRCC36, BABAM2 and BABAM1/NBA1. In the BRCA1-A complex, interacts directly with ABRAXAS1 and BABAM2. Component of the BRISC complex, at least composed of ABRAXAS2, BRCC3/BRCC36, BABAM2 and BABAM1/NBA1. Identified in a complex with SHMT2 and the other subunits of the BRISC complex.

The protein resides in the cytoplasm. It localises to the nucleus. In terms of biological role, component of the BRCA1-A complex, a complex that specifically recognizes 'Lys-63'-linked ubiquitinated histones H2A and H2AX at DNA lesions sites, leading to target the BRCA1-BARD1 heterodimer to sites of DNA damage at double-strand breaks (DSBs). The BRCA1-A complex also possesses deubiquitinase activity that specifically removes 'Lys-63'-linked ubiquitin on histones H2A and H2AX. In the BRCA1-A complex, it is required for the complex integrity and its localization at DSBs. Component of the BRISC complex, a multiprotein complex that specifically cleaves 'Lys-63'-linked ubiquitin in various substrates. In these 2 complexes, it is probably required to maintain the stability of BABAM2 and help the 'Lys-63'-linked deubiquitinase activity mediated by BRCC3/BRCC36 component. The BRISC complex is required for normal mitotic spindle assembly and microtubule attachment to kinetochores via its role in deubiquitinating NUMA1. Plays a role in interferon signaling via its role in the deubiquitination of the interferon receptor IFNAR1; deubiquitination increases IFNAR1 activity by enhancing its stability and cell surface expression. Down-regulates the response to bacterial lipopolysaccharide (LPS) via its role in IFNAR1 deubiquitination. The sequence is that of BRISC and BRCA1-A complex member 1 (Babam1) from Mus musculus (Mouse).